Reading from the N-terminus, the 396-residue chain is Protein-export membrane protein SecD (396 aa).

6 consecutive transmembrane segments (helical) span residues 12 to 32 (ILIL…KGLD), 243 to 263 (LKGT…IVSI), 272 to 292 (IPIL…ASLI), 298 to 318 (LPSI…QIVI), 338 to 358 (FFII…LFVL), and 360 to 380 (VGML…GIFI).

The protein belongs to the SecD/SecF family. SecD subfamily. Part of the protein translocation apparatus. Forms a complex with SecF.

It is found in the cell membrane. In terms of biological role, involved in protein export. This is Protein-export membrane protein SecD from Methanocaldococcus jannaschii (strain ATCC 43067 / DSM 2661 / JAL-1 / JCM 10045 / NBRC 100440) (Methanococcus jannaschii).